Consider the following 766-residue polypeptide: 5-methyltetrahydropteroyltriglutamate--homocysteine methyltransferase (766 aa).

5-methyltetrahydropteroyltri-L-glutamate is bound by residues 23 to 26 (RELK) and Lys-121. Residues 438–440 (IGS) and Glu-491 each bind L-homocysteine. Residues 438-440 (IGS) and Glu-491 contribute to the L-methionine site. Residues 522–523 (RC) and Trp-568 contribute to the 5-methyltetrahydropteroyltri-L-glutamate site. Asp-606 is an L-homocysteine binding site. Asp-606 contributes to the L-methionine binding site. Glu-612 provides a ligand contact to 5-methyltetrahydropteroyltri-L-glutamate. Zn(2+) contacts are provided by His-648, Cys-650, and Glu-672. His-701 functions as the Proton donor in the catalytic mechanism. A Zn(2+)-binding site is contributed by Cys-733.

The protein belongs to the vitamin-B12 independent methionine synthase family. Zn(2+) serves as cofactor.

It carries out the reaction 5-methyltetrahydropteroyltri-L-glutamate + L-homocysteine = tetrahydropteroyltri-L-glutamate + L-methionine. The protein operates within amino-acid biosynthesis; L-methionine biosynthesis via de novo pathway; L-methionine from L-homocysteine (MetE route): step 1/1. Its function is as follows. Catalyzes the transfer of a methyl group from 5-methyltetrahydrofolate to homocysteine resulting in methionine formation. The polypeptide is 5-methyltetrahydropteroyltriglutamate--homocysteine methyltransferase (Photobacterium profundum (strain SS9)).